We begin with the raw amino-acid sequence, 128 residues long: 2-iminobutanoate/2-iminopropanoate deaminase (128 aa).

R105 contributes to the substrate binding site.

It belongs to the RutC family. In terms of assembly, homotrimer.

The protein localises to the cytoplasm. The catalysed reaction is 2-iminobutanoate + H2O = 2-oxobutanoate + NH4(+). The enzyme catalyses 2-iminopropanoate + H2O = pyruvate + NH4(+). The protein operates within amino-acid biosynthesis; L-isoleucine biosynthesis; 2-oxobutanoate from L-threonine. Accelerates the release of ammonia from reactive enamine/imine intermediates of the PLP-dependent threonine dehydratase (IlvA) in the low water environment of the cell. It catalyzes the deamination of enamine/imine intermediates to yield 2-ketobutyrate and ammonia. It is required for the detoxification of reactive intermediates of IlvA due to their highly nucleophilic abilities and to avoid they are captured by anthranilate phosphoribosyltransferase (TrpD) to generate PRA, an intermediate in the alternative pyrimidine biosynthetic (APB) pathway. Also required for full activity of IlvE which is involved in the isoleucine biosynthesis. RidA also accelerates the release of pyruvate produced by IlvA from L-serine. The polypeptide is 2-iminobutanoate/2-iminopropanoate deaminase (Salmonella typhimurium (strain LT2 / SGSC1412 / ATCC 700720)).